The chain runs to 163 residues: Phosphopantetheine adenylyltransferase (163 aa).

Substrate is bound at residue Ser8. ATP-binding positions include 8-9 and His16; that span reads SF. Positions 40, 72, and 86 each coordinate substrate. ATP contacts are provided by residues 87 to 89, Glu97, and 122 to 128; these read GLR and HSFLSSS.

The protein belongs to the bacterial CoaD family. Homohexamer. Mg(2+) serves as cofactor.

Its subcellular location is the cytoplasm. The enzyme catalyses (R)-4'-phosphopantetheine + ATP + H(+) = 3'-dephospho-CoA + diphosphate. Its pathway is cofactor biosynthesis; coenzyme A biosynthesis; CoA from (R)-pantothenate: step 4/5. Its function is as follows. Reversibly transfers an adenylyl group from ATP to 4'-phosphopantetheine, yielding dephospho-CoA (dPCoA) and pyrophosphate. This Synechococcus sp. (strain CC9902) protein is Phosphopantetheine adenylyltransferase.